A 450-amino-acid chain; its full sequence is ATP-dependent protease ATPase subunit HslU (450 aa).

ATP is bound by residues Val29, 71 to 76 (GVGKTE), Asp261, Glu328, and Arg400.

This sequence belongs to the ClpX chaperone family. HslU subfamily. In terms of assembly, a double ring-shaped homohexamer of HslV is capped on each side by a ring-shaped HslU homohexamer. The assembly of the HslU/HslV complex is dependent on binding of ATP.

The protein localises to the cytoplasm. ATPase subunit of a proteasome-like degradation complex; this subunit has chaperone activity. The binding of ATP and its subsequent hydrolysis by HslU are essential for unfolding of protein substrates subsequently hydrolyzed by HslV. HslU recognizes the N-terminal part of its protein substrates and unfolds these before they are guided to HslV for hydrolysis. The chain is ATP-dependent protease ATPase subunit HslU from Rickettsia felis (strain ATCC VR-1525 / URRWXCal2) (Rickettsia azadi).